The following is a 2663-amino-acid chain: Ankyrin repeat domain-containing protein 11 (2663 aa).

2 disordered regions span residues 1 to 90 and 128 to 169; these read MPKG…KEPV and SANS…ERGE. Basic and acidic residues-rich tracts occupy residues 21-54 and 69-90; these read MVEK…VRER and EQKD…KEPV. The segment covering 128–155 has biased composition (polar residues); it reads SANSPVDTTPKHPSQSTVCQKGTPNSAS. Residues 156 to 169 are compositionally biased toward basic and acidic residues; that stretch reads KTKDKVNKRNERGE. ANK repeat units follow at residues 167–196, 200–229, 233–262, and 266–292; these read RGET…DVNV, AGWT…EVNT, DDDT…NPQQ, and KGET…YTSS. Phosphoserine is present on Ser276. Disordered regions lie at residues 289-380, 398-647, and 723-783; these read YTSS…SNSF, APKK…GQCS, and DTNK…NDLK. Over residues 295-305 the composition is skewed to acidic residues; sequence SSTESSEEEDA. Polar residues predominate over residues 309 to 320; it reads APSSSVDGNNTD. Over residues 356–376 the composition is skewed to basic and acidic residues; it reads DRVPPVDDKHLLKKDYRKETK. At Ser408 the chain carries Phosphoserine. Residue Thr410 is modified to Phosphothreonine. Ser411 is subject to Phosphoserine. Positions 438–451 are enriched in basic and acidic residues; the sequence is KTREPSNAKQQKEK. Residues 452–462 are compositionally biased toward basic residues; the sequence is NKVKKKRKKET. Basic and acidic residues predominate over residues 463-477; the sequence is KGREVRFGKRSDKFC. Residues 481 to 493 are compositionally biased toward acidic residues; that stretch reads SESESSESGEDDR. A compositionally biased stretch (low complexity) spans 513–531; the sequence is SLFSSLSASSTSSHGSSAA. Residues 539–550 show a composition bias toward basic and acidic residues; it reads TDQHTKHWRTDN. Positions 551 to 562 are enriched in polar residues; the sequence is WKTISSPAWSEV. The segment covering 576 to 588 has biased composition (low complexity); it reads ESDYSSEGSSVES. 2 stretches are compositionally biased toward basic residues: residues 591 to 602 and 629 to 641; these read PVRKRQEHRKRA and VKKH…HKNK. Position 834 is a phosphoserine (Ser834). Composition is skewed to basic and acidic residues over residues 881 to 928, 935 to 1043, 1059 to 1090, and 1099 to 1112; these read VKED…EKHK, SEKD…KSIL, KKDT…KEKA, and FSEK…KEKS. 2 disordered regions span residues 881-1043 and 1059-1393; these read VKED…KSIL and KKDT…GQYE. Ser1079 bears the Phosphoserine mark. At Thr1120 the chain carries Phosphothreonine. Ser1123 carries the post-translational modification Phosphoserine. Composition is skewed to basic and acidic residues over residues 1142-1301, 1330-1347, and 1359-1393; these read DLPR…DKIS, GDDK…LKEK, and KSHD…GQYE. At Thr1419 the chain carries Phosphothreonine. Composition is skewed to basic and acidic residues over residues 1424 to 1446, 1466 to 1545, 1556 to 1574, 1587 to 1597, and 1605 to 1639; these read STEK…KELK, REKW…KGDP, APSK…KLLG, LSQKDLEIEER, and MKQM…DIPA. The interval 1424–1710 is disordered; that stretch reads STEKKDKNDS…TGVPTPTSVL (287 aa). A Phosphoserine modification is found at Ser1509. At Ser1692 the chain carries Phosphoserine. Residues 1698–1710 are compositionally biased toward polar residues; the sequence is SRPTGVPTPTSVL. Position 1792 is a phosphoserine (Ser1792). A disordered region spans residues 1814–1836; the sequence is SVPAASSYDSPMPPSMEDRAPLP. At Ser1847 the chain carries Phosphoserine. 2 positions are modified to phosphotyrosine: Tyr1850 and Tyr1851. Phosphoserine is present on residues Ser1852, Ser1859, and Ser1990. Disordered stretches follow at residues 1988-2019 and 2131-2406; these read PESP…PAPP and LDLG…STQQ. 2 stretches are compositionally biased toward low complexity: residues 2310–2324 and 2391–2406; these read IQPE…AEAP and RSTQ…STQQ. Positions 2369 to 2663 are important for protein degradation; that stretch reads AKARGSEDDD…VNDDFVLLPA (295 aa).

In terms of assembly, interacts with the PAS region of the p160 coactivators. Subject to proteasomal degradation which is probably essential to regulate its activity.

It localises to the nucleus. Its function is as follows. Chromatin regulator which modulates histone acetylation and gene expression in neural precursor cells. May recruit histone deacetylases (HDACs) to the p160 coactivators/nuclear receptor complex to inhibit ligand-dependent transactivation. Has a role in proliferation and development of cortical neural precursors. May also regulate bone homeostasis. This is Ankyrin repeat domain-containing protein 11 (ANKRD11) from Homo sapiens (Human).